We begin with the raw amino-acid sequence, 241 residues long: Small ribosomal subunit protein uS2 (241 aa).

The protein belongs to the universal ribosomal protein uS2 family.

In Klebsiella pneumoniae (strain 342), this protein is Small ribosomal subunit protein uS2.